We begin with the raw amino-acid sequence, 330 residues long: Biotin synthase 2 (330 aa).

The Radical SAM core domain maps to 48 to 278 (MCGDGFDMCS…QAAIRLAGGR (231 aa)). [4Fe-4S] cluster contacts are provided by C66, C70, and C73. Positions 111, 143, 203, and 273 each coordinate [2Fe-2S] cluster.

Belongs to the radical SAM superfamily. Biotin synthase family. As to quaternary structure, homodimer. [4Fe-4S] cluster serves as cofactor. The cofactor is [2Fe-2S] cluster.

It catalyses the reaction (4R,5S)-dethiobiotin + (sulfur carrier)-SH + 2 reduced [2Fe-2S]-[ferredoxin] + 2 S-adenosyl-L-methionine = (sulfur carrier)-H + biotin + 2 5'-deoxyadenosine + 2 L-methionine + 2 oxidized [2Fe-2S]-[ferredoxin]. The protein operates within cofactor biosynthesis; biotin biosynthesis; biotin from 7,8-diaminononanoate: step 2/2. Its function is as follows. Catalyzes the conversion of dethiobiotin (DTB) to biotin by the insertion of a sulfur atom into dethiobiotin via a radical-based mechanism. This chain is Biotin synthase 2, found in Corynebacterium diphtheriae (strain ATCC 700971 / NCTC 13129 / Biotype gravis).